The sequence spans 139 residues: Large-conductance mechanosensitive channel (139 aa).

2 helical membrane passes run 9 to 29 and 79 to 99; these read AFAV…GAAF and IQTV…VKAI.

The protein belongs to the MscL family. As to quaternary structure, homopentamer.

The protein localises to the cell inner membrane. Functionally, channel that opens in response to stretch forces in the membrane lipid bilayer. May participate in the regulation of osmotic pressure changes within the cell. The polypeptide is Large-conductance mechanosensitive channel (Pseudomonas putida (strain W619)).